A 130-amino-acid chain; its full sequence is Iron-sulfur cluster insertion protein ErpA (130 aa).

C46, C116, and C118 together coordinate iron-sulfur cluster.

It belongs to the HesB/IscA family. In terms of assembly, homodimer. Iron-sulfur cluster serves as cofactor.

Its function is as follows. Required for insertion of 4Fe-4S clusters for at least IspG. The protein is Iron-sulfur cluster insertion protein ErpA of Legionella pneumophila (strain Paris).